Consider the following 384-residue polypeptide: Deoxyguanosinetriphosphate triphosphohydrolase-like protein (384 aa).

The tract at residues 13–42 is disordered; it reads LASYASDPSKTRGRRHSEPPPENRTEFQRD. Basic and acidic residues predominate over residues 28-42; the sequence is HSEPPPENRTEFQRD. In terms of domain architecture, HD spans 73–208; the sequence is RLTHSLEVAQ…ANLADEVAYN (136 aa).

The protein belongs to the dGTPase family. Type 2 subfamily.

The protein is Deoxyguanosinetriphosphate triphosphohydrolase-like protein of Bordetella bronchiseptica (strain ATCC BAA-588 / NCTC 13252 / RB50) (Alcaligenes bronchisepticus).